A 260-amino-acid chain; its full sequence is Archaerhodopsin-1 (260 aa).

The propeptide occupies 1–6 (MDPIAL). The Extracellular portion of the chain corresponds to 7-20 (TAAVGADLLGDGRP). Residues 21–42 (ETLWLGIGTLLMLIGTFYFIVK) form a helical membrane-spanning segment. The Cytoplasmic segment spans residues 43–51 (GWGVTDKEA). A helical membrane pass occupies residues 52-73 (REYYSITILVPGIASAAYLSMF). Topologically, residues 74–91 (FGIGLTEVQVGSEMLDIY) are extracellular. Residues 92–113 (YARYADWLFTTPLLLLDLALLA) traverse the membrane as a helical segment. Over 114 to 116 (KVD) the chain is Cytoplasmic. A helical membrane pass occupies residues 117-139 (RVSIGTLVGVDALMIVTGLVGAL). The Extracellular portion of the chain corresponds to 140-143 (SHTP). A helical membrane pass occupies residues 144-172 (LARYTWWLFSTICMIVVLYFLATSLRAAA). Residues 173–176 (KERG) lie on the Cytoplasmic side of the membrane. Residues 177–204 (PEVASTFNTLTALVLVLWTAYPILWIIG) form a helical membrane-spanning segment. Over 205–212 (TEGAGVVG) the chain is Extracellular. Residues 213–245 (LGIETLLFMVLDVTAKVGFGFILLRSRAILGDT) form a helical membrane-spanning segment. Position 228 is an N6-(retinylidene)lysine (Lys228). The Cytoplasmic segment spans residues 246–260 (EAPEPSAGAEASAAD).

Belongs to the archaeal/bacterial/fungal opsin family.

The protein resides in the cell membrane. Its function is as follows. Light-driven proton pump. It may interact with bacterioruberin in the claret membrane. This Halorubrum ezzemoulense (Halorubrum chaoviator) protein is Archaerhodopsin-1.